A 66-amino-acid chain; its full sequence is Large ribosomal subunit protein bL35 (66 aa).

Positions 20-40 are disordered; the sequence is GKVKHAQRGKRHGMIKRTKKQ.

The protein belongs to the bacterial ribosomal protein bL35 family.

The protein is Large ribosomal subunit protein bL35 of Nitrobacter winogradskyi (strain ATCC 25391 / DSM 10237 / CIP 104748 / NCIMB 11846 / Nb-255).